A 412-amino-acid polypeptide reads, in one-letter code: 2,3-bisphosphoglycerate-independent phosphoglycerate mutase (412 aa).

Belongs to the BPG-independent phosphoglycerate mutase family. A-PGAM subfamily.

It carries out the reaction (2R)-2-phosphoglycerate = (2R)-3-phosphoglycerate. Its pathway is carbohydrate degradation; glycolysis; pyruvate from D-glyceraldehyde 3-phosphate: step 3/5. Catalyzes the interconversion of 2-phosphoglycerate and 3-phosphoglycerate. This is 2,3-bisphosphoglycerate-independent phosphoglycerate mutase (apgM) from Pyrococcus horikoshii (strain ATCC 700860 / DSM 12428 / JCM 9974 / NBRC 100139 / OT-3).